A 308-amino-acid chain; its full sequence is Ribosomal protein uL3 glutamine methyltransferase (308 aa).

It belongs to the protein N5-glutamine methyltransferase family. PrmB subfamily.

It carries out the reaction L-glutaminyl-[ribosomal protein uL3] + S-adenosyl-L-methionine = N(5)-methyl-L-glutaminyl-[ribosomal protein uL3] + S-adenosyl-L-homocysteine + H(+). In terms of biological role, methylates large ribosomal subunit protein uL3 on a specific glutamine residue. In Xanthomonas campestris pv. campestris (strain ATCC 33913 / DSM 3586 / NCPPB 528 / LMG 568 / P 25), this protein is Ribosomal protein uL3 glutamine methyltransferase.